Here is a 1578-residue protein sequence, read N- to C-terminus: Chitinase ChiA (1578 aa).

The first 19 residues, 1–19 (MKHYYRLLFLLLFPLLASA), serve as a signal peptide directing secretion. The region spanning 25 to 466 (KKVVGYYAQW…NQVDTSFGSV (442 aa)) is the GH18 1 domain. Residues 26–446 (KVVGYYAQWS…GGMIWELSQD (421 aa)) are GH18N. Residues 92–93 (DA) and 119–122 (GGWT) contribute to the chitin site. The active-site Proton donor is the glutamate 162. Chitin contacts are provided by residues tyrosine 163, 249-252 (FGYD), and tryptophan 441. In terms of domain architecture, CNA-B spans 485-536 (TDVTVELRNASNAVIQTVVSANGNFAFNNLTSGQNYSLTALKATYTFTPVTL). Residues 1142–1462 (KIILGYAHSW…GLMTWSVNWD (321 aa)) form a GH18C region. The GH18 2 domain occupies 1142–1483 (KIILGYAHSW…KAYAAYFASQ (342 aa)). Catalysis depends on glutamate 1264, which acts as the Proton donor. The segment at 1473–1578 (SKAYAAYFAS…KSFKVMNFLN (106 aa)) is CTD.

The protein belongs to the glycosyl hydrolase 18 family. Chitinase class II subfamily.

The protein resides in the secreted. It carries out the reaction Random endo-hydrolysis of N-acetyl-beta-D-glucosaminide (1-&gt;4)-beta-linkages in chitin and chitodextrins.. Major extracellular chitinase, which is essential for chitin utilization. In Flavobacterium johnsoniae (strain ATCC 17061 / DSM 2064 / JCM 8514 / BCRC 14874 / CCUG 350202 / NBRC 14942 / NCIMB 11054 / UW101) (Cytophaga johnsonae), this protein is Chitinase ChiA (chiA).